The primary structure comprises 463 residues: Secretogranin-3 (463 aa).

The N-terminal stretch at 1–20 (MGPKYVFITAIIGVFWHVQG) is a signal peptide. 3 disordered regions span residues 87–111 (VKRSGSVRSSVGGHRGTLDDADSTK), 225–267 (DDDK…PEED), and 353–398 (EDKN…KGKA). 2 stretches are compositionally biased toward basic and acidic residues: residues 102-111 (GTLDDADSTK) and 229-262 (QEGKMETRNKNEDRESSETKNEDSFSSKERRNEL).

In terms of assembly, interacts with CHGA. Interacts with secretogranin II/SCG2. Interacts (via C-terminus) with CPE.

The protein localises to the cytoplasmic vesicle. It is found in the secretory vesicle. Its subcellular location is the secretory vesicle membrane. It localises to the secreted. In terms of biological role, member of the granin protein family that regulates the biogenesis of secretory granules. Acts as a sorting receptor for intragranular proteins including chromogranin A/CHGA. May also play a role in angiogenesis. Promotes endothelial proliferation, migration and tube formation through MEK/ERK signaling pathway. The polypeptide is Secretogranin-3 (scg3) (Xenopus tropicalis (Western clawed frog)).